An 877-amino-acid chain; its full sequence is Alanine--tRNA ligase (877 aa).

Residues histidine 562, histidine 566, cysteine 664, and histidine 668 each coordinate Zn(2+).

It belongs to the class-II aminoacyl-tRNA synthetase family. Zn(2+) serves as cofactor.

It is found in the cytoplasm. The catalysed reaction is tRNA(Ala) + L-alanine + ATP = L-alanyl-tRNA(Ala) + AMP + diphosphate. Its function is as follows. Catalyzes the attachment of alanine to tRNA(Ala) in a two-step reaction: alanine is first activated by ATP to form Ala-AMP and then transferred to the acceptor end of tRNA(Ala). Also edits incorrectly charged Ser-tRNA(Ala) and Gly-tRNA(Ala) via its editing domain. The protein is Alanine--tRNA ligase of Picosynechococcus sp. (strain ATCC 27264 / PCC 7002 / PR-6) (Agmenellum quadruplicatum).